The chain runs to 498 residues: Glycerol kinase (498 aa).

An ADP-binding site is contributed by Thr12. Residues Thr12, Thr13, and Ser14 each coordinate ATP. Thr12 lines the sn-glycerol 3-phosphate pocket. Arg16 lines the ADP pocket. Residues Arg82, Glu83, Tyr134, and Asp244 each contribute to the sn-glycerol 3-phosphate site. The glycerol site is built by Arg82, Glu83, Tyr134, Asp244, and Gln245. ADP-binding residues include Thr266 and Gly310. ATP-binding residues include Thr266, Gly310, Gln314, and Gly411. Residues Gly411 and Asn415 each contribute to the ADP site.

It belongs to the FGGY kinase family.

The enzyme catalyses glycerol + ATP = sn-glycerol 3-phosphate + ADP + H(+). It functions in the pathway polyol metabolism; glycerol degradation via glycerol kinase pathway; sn-glycerol 3-phosphate from glycerol: step 1/1. Inhibited by fructose 1,6-bisphosphate (FBP). In terms of biological role, key enzyme in the regulation of glycerol uptake and metabolism. Catalyzes the phosphorylation of glycerol to yield sn-glycerol 3-phosphate. This is Glycerol kinase from Chloroflexus aurantiacus (strain ATCC 29364 / DSM 637 / Y-400-fl).